A 301-amino-acid chain; its full sequence is Putative S-adenosyl-L-methionine-dependent methyltransferase MT0851 (301 aa).

Residues Asp-127 and 156-157 (DL) contribute to the S-adenosyl-L-methionine site.

Belongs to the UPF0677 family.

Functionally, exhibits S-adenosyl-L-methionine-dependent methyltransferase activity. This Mycobacterium tuberculosis (strain CDC 1551 / Oshkosh) protein is Putative S-adenosyl-L-methionine-dependent methyltransferase MT0851.